The sequence spans 384 residues: Iron(3+)-hydroxamate import system permease protein FhuB (384 aa).

Transmembrane regions (helical) follow at residues 58–78, 115–135, 154–174, 176–196, 202–222, 243–263, 296–316, 330–350, and 357–377; these read GAVIVLIAGLCLLCLGAFLSI, TAAAALVGALLAVSGAIMQGM, FAVSIAFAFFPGLSAMGLVLW, FAGAGLGASTVMGIGMFSRGG, LALAGTAVTYFFTGISTAIAI, WSGVQLLLIAGAVGLTLAFFI, VILTGAAVSIAGTIAFIGLII, WIIPCSAVLGAVLLVFADIAA, and FETPVGALTSLIGVPFFFYLA.

It belongs to the binding-protein-dependent transport system permease family. FecCD subfamily. In terms of assembly, the complex is composed of an ATP-binding protein (FhuC), two transmembrane proteins (FhuB and FhuG) and a solute-binding protein (FhuD or YxeB).

The protein resides in the cell membrane. It is found in the membrane raft. Its function is as follows. Part of the ABC transporter complex FhuBGCD involved in iron(3+)-hydroxamate import. Responsible for the translocation of the substrate across the membrane. The polypeptide is Iron(3+)-hydroxamate import system permease protein FhuB (fhuB) (Bacillus subtilis (strain 168)).